Consider the following 39-residue polypeptide: Protein YkiC (39 aa).

A helical membrane pass occupies residues 13–35 (LLSAKLCNCTQAIMTHIIASFLA).

It is found in the cell inner membrane. This Escherichia coli (strain K12) protein is Protein YkiC.